Consider the following 408-residue polypeptide: Argininosuccinate synthase (408 aa).

Residue Ala8 to Ser16 participates in ATP binding. Tyr86 contacts L-citrulline. Gly116 is a binding site for ATP. L-aspartate-binding residues include Thr118, Asn122, and Asp123. Position 122 (Asn122) interacts with L-citrulline. 4 residues coordinate L-citrulline: Arg126, Ser174, Glu259, and Tyr271.

This sequence belongs to the argininosuccinate synthase family. Type 1 subfamily. Homotetramer.

It is found in the cytoplasm. The catalysed reaction is L-citrulline + L-aspartate + ATP = 2-(N(omega)-L-arginino)succinate + AMP + diphosphate + H(+). It participates in amino-acid biosynthesis; L-arginine biosynthesis; L-arginine from L-ornithine and carbamoyl phosphate: step 2/3. The polypeptide is Argininosuccinate synthase (Leuconostoc mesenteroides subsp. mesenteroides (strain ATCC 8293 / DSM 20343 / BCRC 11652 / CCM 1803 / JCM 6124 / NCDO 523 / NBRC 100496 / NCIMB 8023 / NCTC 12954 / NRRL B-1118 / 37Y)).